The following is a 119-amino-acid chain: MPRVKGGTVTRKRRKKIVKLAKGYYGSKHLLFKVANQAVMKSYQYAYRDRRQKKRDFRRLWIARINAAARMQDLSYSKLMHGLKLAGIDINRKMLADLAVNDIASFNTLADSAKKALAK.

This sequence belongs to the bacterial ribosomal protein bL20 family.

Its function is as follows. Binds directly to 23S ribosomal RNA and is necessary for the in vitro assembly process of the 50S ribosomal subunit. It is not involved in the protein synthesizing functions of that subunit. The protein is Large ribosomal subunit protein bL20 of Listeria innocua serovar 6a (strain ATCC BAA-680 / CLIP 11262).